A 514-amino-acid polypeptide reads, in one-letter code: Bifunctional purine biosynthesis protein PurH (514 aa).

An MGS-like domain is found at 1–146; the sequence is MARLALLSVS…KNFAHLAVLC (146 aa).

Belongs to the PurH family.

It catalyses the reaction (6R)-10-formyltetrahydrofolate + 5-amino-1-(5-phospho-beta-D-ribosyl)imidazole-4-carboxamide = 5-formamido-1-(5-phospho-D-ribosyl)imidazole-4-carboxamide + (6S)-5,6,7,8-tetrahydrofolate. The enzyme catalyses IMP + H2O = 5-formamido-1-(5-phospho-D-ribosyl)imidazole-4-carboxamide. Its pathway is purine metabolism; IMP biosynthesis via de novo pathway; 5-formamido-1-(5-phospho-D-ribosyl)imidazole-4-carboxamide from 5-amino-1-(5-phospho-D-ribosyl)imidazole-4-carboxamide (10-formyl THF route): step 1/1. It functions in the pathway purine metabolism; IMP biosynthesis via de novo pathway; IMP from 5-formamido-1-(5-phospho-D-ribosyl)imidazole-4-carboxamide: step 1/1. The chain is Bifunctional purine biosynthesis protein PurH from Nostoc punctiforme (strain ATCC 29133 / PCC 73102).